The primary structure comprises 349 residues: Protein O-mannose kinase (349 aa).

Residues 1–19 (MGQQHGTRNGLTHRELPRG) lie on the Cytoplasmic side of the membrane. Residues 20-42 (VGLLLAMALMNVALYLCLDQLFI) form a helical; Signal-anchor for type II membrane protein membrane-spanning segment. The Lumenal segment spans residues 43-349 (SPGRSTADSR…TVMSQTKEML (307 aa)). 3 N-linked (GlcNAc...) asparagine glycosylation sites follow: N66, N164, and N219. One can recognise a Protein kinase domain in the interval 80–349 (VRQLKRVGEG…TVMSQTKEML (270 aa)).

It belongs to the protein kinase superfamily. Ser/Thr protein kinase family. STKL subfamily.

It localises to the endoplasmic reticulum membrane. It catalyses the reaction 3-O-[beta-D-GalNAc-(1-&gt;3)-beta-D-GlcNAc-(1-&gt;4)-alpha-D-Man]-L-Thr-[protein] + ATP = 3-O-[beta-D-GalNAc-(1-&gt;3)-beta-D-GlcNAc-(1-&gt;4)-(O-6-P-alpha-D-Man)]-Thr-[protein] + ADP + H(+). Protein O-mannose kinase that specifically mediates phosphorylation at the 6-position of an O-mannose of the trisaccharide (N-acetylgalactosamine (GalNAc)-beta-1,3-N-acetylglucosamine (GlcNAc)-beta-1,4-mannose) to generate phosphorylated O-mannosyl trisaccharide (N-acetylgalactosamine-beta-1,3-N-acetylglucosamine-beta-1,4-(phosphate-6-)mannose). Phosphorylated O-mannosyl trisaccharide is a carbohydrate structure present in alpha-dystroglycan (DAG1), which is required for binding laminin G-like domain-containing extracellular proteins with high affinity. Only shows kinase activity when the GalNAc-beta-3-GlcNAc-beta-terminus is linked to the 4-position of O-mannose, suggesting that this disaccharide serves as the substrate recognition motif. In Mus musculus (Mouse), this protein is Protein O-mannose kinase (Pomk).